Here is a 64-residue protein sequence, read N- to C-terminus: Small ribosomal subunit protein eS17 (64 aa).

It belongs to the eukaryotic ribosomal protein eS17 family.

This chain is Small ribosomal subunit protein eS17, found in Methanosarcina mazei (strain ATCC BAA-159 / DSM 3647 / Goe1 / Go1 / JCM 11833 / OCM 88) (Methanosarcina frisia).